A 732-amino-acid chain; its full sequence is Anthranilate synthase (732 aa).

Residues arginine 533 to threonine 728 form the Glutamine amidotransferase type-1 domain. Glycine 583–glycine 585 is an L-glutamine binding site. Cysteine 610 serves as the catalytic Nucleophile; for GATase activity. L-glutamine-binding positions include glutamine 614 and serine 660 to leucine 661. Catalysis depends on for GATase activity residues histidine 699 and glutamate 701.

It carries out the reaction chorismate + L-glutamine = anthranilate + pyruvate + L-glutamate + H(+). It participates in amino-acid biosynthesis; L-tryptophan biosynthesis; L-tryptophan from chorismate: step 1/5. This chain is Anthranilate synthase (trpE(G)), found in Azospirillum brasilense.